Consider the following 252-residue polypeptide: Flagellar brake protein YcgR (252 aa).

Residues 123–238 (QRREFYRVPT…TLATVQKYIT (116 aa)) enclose the PilZ domain.

Belongs to the YcgR family. Monomer. Interacts with the flagellar basal bodies.

It is found in the bacterial flagellum basal body. In terms of biological role, acts as a flagellar brake, regulating swimming and swarming in a bis-(3'-5') cyclic diguanylic acid (c-di-GMP)-dependent manner. Binds 1 c-di-GMP dimer per subunit. Increasing levels of c-di-GMP lead to decreased motility. The chain is Flagellar brake protein YcgR from Janthinobacterium sp. (strain Marseille) (Minibacterium massiliensis).